The primary structure comprises 197 residues: Large ribosomal subunit protein uL11 (197 aa).

The protein belongs to the universal ribosomal protein uL11 family. Part of the ribosomal stalk of the 50S ribosomal subunit. Interacts with L10 and the large rRNA to form the base of the stalk. L10 forms an elongated spine to which L12 dimers bind in a sequential fashion forming a multimeric L10(L12)X complex. In terms of processing, one or more lysine residues are methylated.

In terms of biological role, forms part of the ribosomal stalk which helps the ribosome interact with GTP-bound translation factors. This Mycoplasmopsis pulmonis (strain UAB CTIP) (Mycoplasma pulmonis) protein is Large ribosomal subunit protein uL11.